Consider the following 218-residue polypeptide: Oxygen regulatory protein NreC (218 aa).

A Response regulatory domain is found at 2 to 119 (KIVIADDHAV…QLILAVRTVY (118 aa)). Position 53 is a 4-aspartylphosphate (D53). Residues 149–214 (SSDPFKILSK…ELVEYALKKK (66 aa)) form the HTH luxR-type domain. The H-T-H motif DNA-binding region spans 173 to 192 (NKDIAEKLFVSVKTVEAHKT).

In terms of processing, phosphorylated by NreB.

Its subcellular location is the cytoplasm. Functionally, member of the two-component regulatory system NreB/NreC involved in the control of dissimilatory nitrate/nitrite reduction in response to oxygen. Phosphorylated NreC binds to a GC-rich palindromic sequence at the promoters of the nitrate (narGHJI) and nitrite (nir) reductase operons, as well as the putative nitrate transporter gene narT, and activates their expression. This chain is Oxygen regulatory protein NreC (nreC), found in Staphylococcus epidermidis (strain ATCC 35984 / DSM 28319 / BCRC 17069 / CCUG 31568 / BM 3577 / RP62A).